The primary structure comprises 130 residues: Glutamate-rich protein 4 (130 aa).

The span at 91–104 (EEEEESSKEEEEDQ) shows a compositional bias: acidic residues. The tract at residues 91–130 (EEEEESSKEEEEDQEPQRKQEEEHLEACPAPHPPDFEMMI) is disordered. The span at 105-116 (EPQRKQEEEHLE) shows a compositional bias: basic and acidic residues.

The sequence is that of Glutamate-rich protein 4 (ERICH4) from Homo sapiens (Human).